The following is a 58-amino-acid chain: AGSYYSYRRRRCSPRRLYRLRRRRYRSSRRRRRRPCRRRRHRRVCRRVRRRRRCCRRR.

The disordered stretch occupies residues 20-41; the sequence is LRRRRYRSSRRRRRRPCRRRRH.

Belongs to the protamine P2 family. As to expression, testis.

Its subcellular location is the nucleus. It is found in the chromosome. In terms of biological role, protamines substitute for histones in the chromatin of sperm during the haploid phase of spermatogenesis. They compact sperm DNA into a highly condensed, stable and inactive complex. This chain is Sperm histone P2b, found in Equus caballus (Horse).